A 1101-amino-acid chain; its full sequence is MWYASLMSAHHLRVGIDVGTHSVGLATLRVDDHGTPIELLSALSHIHDSGVGKEGKKDHDTRKKLSGIARRARRLLHHRRTQLQQLDEVLRDLGFPIPTPGEFLDLNEQTDPYRVWRVRARLVEEKLPEELRGPAISMAVRHIARHRGWRNPYSKVESLLSPAEESPFMKALRERILATTGEVLDDGITPGQAMAQVALTHNISMRGPEGILGKLHQSDNANEIRKICARQGVSPDVCKQLLRAVFKADSPRGSAVSRVAPDPLPGQGSFRRAPKCDPEFQRFRIISIVANLRISETKGENRPLTADERRHVVTFLTEDSQADLTWVDVAEKLGVHRRDLRGTAVHTDDGERSAARPPIDATDRIMRQTKISSLKTWWEEADSEQRGAMIRYLYEDPTDSECAEIIAELPEEDQAKLDSLHLPAGRAAYSRESLTALSDHMLATTDDLHEARKRLFGVDDSWAPPAEAINAPVGNPSVDRTLKIVGRYLSAVESMWGTPEVIHVEHVRDGFTSERMADERDKANRRRYNDNQEAMKKIQRDYGKEGYISRGDIVRLDALELQGCACLYCGTTIGYHTCQLDHIVPQAGPGSNNRRGNLVAVCERCNRSKSNTPFAVWAQKCGIPHVGVKEAIGRVRGWRKQTPNTSSEDLTRLKKEVIARLRRTQEDPEIDERSMESVAWMANELHHRIAAAYPETTVMVYRGSITAAARKAAGIDSRINLIGEKGRKDRIDRRHHAVDASVVALMEASVAKTLAERSSLRGEQRLTGKEQTWKQYTGSTVGAREHFEMWRGHMLHLTELFNERLAEDKVYVTQNIRLRLSDGNAHTVNPSKLVSHRLGDGLTVQQIDRACTPALWCALTREKDFDEKNGLPAREDRAIRVHGHEIKSSDYIQVFSKRKKTDSDRDETPFGAIAVRGGFVEIGPSIHHARIYRVEGKKPVYAMLRVFTHDLLSQRHGDLFSAVIPPQSISMRCAEPKLRKAITTGNATYLGWVVVGDELEINVDSFTKYAIGRFLEDFPNTTRWRICGYDTNSKLTLKPIVLAAEGLENPSSAVNEIVELKGWRVAINVLTKVHPTVVRRDALGRPRYSSRSNLPTSWTIE.

Residues 1 to 64 (MWYASLMSAH…GKKDHDTRKK (64 aa)) form a ruvC-I region. Asp-17 serves as the catalytic For RuvC-like nuclease domain. Residue Asp-17 coordinates Mn(2+). Positions 64–468 (KLSGIARRAR…DDSWAPPAEA (405 aa)) are recognition lobe. The disordered stretch occupies residues 253–273 (GSAVSRVAPDPLPGQGSFRRA). The tract at residues 468 to 513 (AINAPVGNPSVDRTLKIVGRYLSAVESMWGTPEVIHVEHVRDGFTS) is ruvC-II. Glu-505 serves as a coordination point for Mn(2+). Residues 513 to 675 (SERMADERDK…EDPEIDERSM (163 aa)) form the HNH Cas9-type domain. Cys-566 and Cys-569 together coordinate Zn(2+). Residue Asp-581 coordinates Mg(2+). His-582 (proton acceptor for HNH nuclease domain) is an active-site residue. Mg(2+) contacts are provided by Gln-586, Gly-588, and Gly-590. Residues Cys-602 and Cys-605 each contribute to the Zn(2+) site. Asn-606 serves as a coordination point for Mg(2+). The interval 674–822 (SMESVAWMAN…TQNIRLRLSD (149 aa)) is ruvC-III. His-736 is a binding site for Mn(2+). The PAM-interacting domain (PI) stretch occupies residues 924–1101 (PSIHHARIYR…SNLPTSWTIE (178 aa)).

This sequence belongs to the CRISPR-associated protein Cas9 family. Subtype II-C subfamily. In terms of assembly, monomer. Binds crRNA and tracrRNA. Requires Mg(2+) as cofactor. It depends on Mn(2+) as a cofactor. Zn(2+) serves as cofactor.

Its function is as follows. CRISPR (clustered regularly interspaced short palindromic repeat) is an adaptive immune system that provides protection against mobile genetic elements (viruses, transposable elements and conjugative plasmids). CRISPR clusters contain spacers, sequences complementary to antecedent mobile elements, and target invading nucleic acids. CRISPR clusters are transcribed and processed into CRISPR RNA (crRNA). In type II CRISPR systems correct processing of pre-crRNA requires a trans-encoded small RNA (tracrRNA), endogenous ribonuclease 3 (rnc) and this protein. The tracrRNA serves as a guide for ribonuclease 3-aided processing of pre-crRNA. Subsequently Cas9/crRNA/tracrRNA endonucleolytically cleaves linear or circular dsDNA target complementary to the spacer; Cas9 is inactive in the absence of the 2 guide RNAs (gRNA). Cas9 recognizes the protospacer adjacent motif (PAM) in the CRISPR repeat sequences to help distinguish self versus nonself, as targets within the bacterial CRISPR locus do not have PAMs. PAM recognition is also required for catalytic activity. The chain is CRISPR-associated endonuclease Cas9 (cas9) from Actinomyces naeslundii (strain ATCC 12104 / DSM 43013 / CCUG 2238 / JCM 8349 / NCTC 10301 / Howell 279).